We begin with the raw amino-acid sequence, 156 residues long: ATP synthase subunit b', organellar chromatophore (156 aa).

A helical transmembrane segment spans residues 23 to 43 (TLPLMAIQVVFLTFILNAIFF).

This sequence belongs to the ATPase B chain family. As to quaternary structure, F-type ATPases have 2 components, F(1) - the catalytic core - and F(0) - the membrane proton channel. F(1) has five subunits: alpha(3), beta(3), gamma(1), delta(1), epsilon(1). F(0) has four main subunits: a(1), b(1), b'(1) and c(10-14). The alpha and beta chains form an alternating ring which encloses part of the gamma chain. F(1) is attached to F(0) by a central stalk formed by the gamma and epsilon chains, while a peripheral stalk is formed by the delta, b and b' chains.

Its subcellular location is the plastid. The protein resides in the organellar chromatophore thylakoid membrane. In terms of biological role, f(1)F(0) ATP synthase produces ATP from ADP in the presence of a proton or sodium gradient. F-type ATPases consist of two structural domains, F(1) containing the extramembraneous catalytic core and F(0) containing the membrane proton channel, linked together by a central stalk and a peripheral stalk. During catalysis, ATP synthesis in the catalytic domain of F(1) is coupled via a rotary mechanism of the central stalk subunits to proton translocation. Its function is as follows. Component of the F(0) channel, it forms part of the peripheral stalk, linking F(1) to F(0). The b'-subunit is a diverged and duplicated form of b found in plants and photosynthetic bacteria. In Paulinella chromatophora, this protein is ATP synthase subunit b', organellar chromatophore.